The chain runs to 155 residues: uncharacterized protein (155 aa).

The N-acetyltransferase domain maps to 7 to 154 (LQINYKTLEE…VWLPESVELQ (148 aa)).

This is an uncharacterized protein from Brevibacillus brevis (strain 47 / JCM 6285 / NBRC 100599).